The primary structure comprises 616 residues: Dihydroxy-acid dehydratase (616 aa).

Asp81 is a binding site for Mg(2+). Cys122 is a binding site for [2Fe-2S] cluster. Mg(2+)-binding residues include Asp123 and Lys124. N6-carboxylysine is present on Lys124. Residue Cys195 coordinates [2Fe-2S] cluster. Glu491 contributes to the Mg(2+) binding site. The active-site Proton acceptor is Ser517.

This sequence belongs to the IlvD/Edd family. In terms of assembly, homodimer. [2Fe-2S] cluster is required as a cofactor. The cofactor is Mg(2+).

It carries out the reaction (2R)-2,3-dihydroxy-3-methylbutanoate = 3-methyl-2-oxobutanoate + H2O. It catalyses the reaction (2R,3R)-2,3-dihydroxy-3-methylpentanoate = (S)-3-methyl-2-oxopentanoate + H2O. It functions in the pathway amino-acid biosynthesis; L-isoleucine biosynthesis; L-isoleucine from 2-oxobutanoate: step 3/4. Its pathway is amino-acid biosynthesis; L-valine biosynthesis; L-valine from pyruvate: step 3/4. Functions in the biosynthesis of branched-chain amino acids. Catalyzes the dehydration of (2R,3R)-2,3-dihydroxy-3-methylpentanoate (2,3-dihydroxy-3-methylvalerate) into 2-oxo-3-methylpentanoate (2-oxo-3-methylvalerate) and of (2R)-2,3-dihydroxy-3-methylbutanoate (2,3-dihydroxyisovalerate) into 2-oxo-3-methylbutanoate (2-oxoisovalerate), the penultimate precursor to L-isoleucine and L-valine, respectively. This Salmonella gallinarum (strain 287/91 / NCTC 13346) protein is Dihydroxy-acid dehydratase.